The sequence spans 305 residues: GTPase Era (305 aa).

Residues 13-181 (RCGFVAIVGR…ESAVGRFLPE (169 aa)) enclose the Era-type G domain. Residues 21 to 28 (GRPNVGKS) form a G1 region. Residue 21 to 28 (GRPNVGKS) participates in GTP binding. The G2 stretch occupies residues 47–51 (QTTRH). The tract at residues 68 to 71 (DTPG) is G3. GTP-binding positions include 68 to 72 (DTPGM) and 130 to 133 (NKVD). The tract at residues 130-133 (NKVD) is G4. Residues 160–162 (LSA) are G5. Positions 204–288 (VREKITRQLG…MLRLWVKVKR (85 aa)) constitute a KH type-2 domain.

The protein belongs to the TRAFAC class TrmE-Era-EngA-EngB-Septin-like GTPase superfamily. Era GTPase family. As to quaternary structure, monomer.

The protein localises to the cytoplasm. It is found in the cell inner membrane. Its function is as follows. An essential GTPase that binds both GDP and GTP, with rapid nucleotide exchange. Plays a role in 16S rRNA processing and 30S ribosomal subunit biogenesis and possibly also in cell cycle regulation and energy metabolism. The polypeptide is GTPase Era (Marinobacter nauticus (strain ATCC 700491 / DSM 11845 / VT8) (Marinobacter aquaeolei)).